The following is a 78-amino-acid chain: Large ribosomal subunit protein uL29 (78 aa).

The protein belongs to the universal ribosomal protein uL29 family.

The polypeptide is Large ribosomal subunit protein uL29 (Rippkaea orientalis (strain PCC 8801 / RF-1) (Cyanothece sp. (strain PCC 8801))).